The primary structure comprises 65 residues: DNA-directed RNA polymerase subunit Rpo10 (65 aa).

Zn(2+)-binding residues include C7, C10, C44, and C45.

The protein belongs to the archaeal Rpo10/eukaryotic RPB10 RNA polymerase subunit family. In terms of assembly, part of the RNA polymerase complex. Zn(2+) is required as a cofactor.

It is found in the cytoplasm. The enzyme catalyses RNA(n) + a ribonucleoside 5'-triphosphate = RNA(n+1) + diphosphate. Functionally, DNA-dependent RNA polymerase (RNAP) catalyzes the transcription of DNA into RNA using the four ribonucleoside triphosphates as substrates. This is DNA-directed RNA polymerase subunit Rpo10 from Nanoarchaeum equitans (strain Kin4-M).